The primary structure comprises 119 residues: Large ribosomal subunit protein uL18 (119 aa).

The protein belongs to the universal ribosomal protein uL18 family. Part of the 50S ribosomal subunit; part of the 5S rRNA/L5/L18/L25 subcomplex. Contacts the 5S and 23S rRNAs.

In terms of biological role, this is one of the proteins that bind and probably mediate the attachment of the 5S RNA into the large ribosomal subunit, where it forms part of the central protuberance. The protein is Large ribosomal subunit protein uL18 of Desulfovibrio desulfuricans (strain ATCC 27774 / DSM 6949 / MB).